We begin with the raw amino-acid sequence, 213 residues long: Phosphoribosyl-dephospho-CoA transferase (213 aa).

Residues Asp-135 and Asp-137 contribute to the active site.

This sequence belongs to the MdcG family.

The enzyme catalyses apo-[malonate decarboxylase ACP] + 2'-(5''-triphospho-alpha-D-ribosyl)-3'-dephospho-CoA = holo-[malonate decarboxylase ACP] + diphosphate. In terms of biological role, transfers 2'-(5-triphosphoribosyl)-3'-dephosphocoenzyme-A to the apo-[acyl-carrier-protein] of the malonate decarboxylase to yield holo-[acyl-carrier-protein]. This chain is Phosphoribosyl-dephospho-CoA transferase, found in Xanthomonas axonopodis pv. citri (strain 306).